A 266-amino-acid chain; its full sequence is Bidirectional sugar transporter SWEET7b (266 aa).

The Extracellular segment spans residues 1–9 (MVSPDLIRN). A helical transmembrane segment spans residues 10–30 (MVGIVGNIISFGLFLSPVPTF). In terms of domain architecture, MtN3/slv 1 spans 10 to 97 (MVGIVGNIIS…TIFFLFSDKK (88 aa)). Residues 31 to 45 (YRIIKNKDVQDFKAD) lie on the Cytoplasmic side of the membrane. The helical transmembrane segment at 46–66 (PYLATLLNCMLWVFYGLPIVH) threads the bilayer. At 67–69 (PNS) the chain is on the extracellular side. A helical membrane pass occupies residues 70-90 (ILVVTINGIGLIIEAVYLTIF). The Cytoplasmic portion of the chain corresponds to 91–101 (FLFSDKKNKKK). Residues 102–122 (MGVVLATEALFMAAVVLGVLL) traverse the membrane as a helical segment. Residues 123 to 131 (GAHTHQRRS) are Extracellular-facing. Residues 132-152 (LIVGILCAIFGTIMYSSPLTI) form a helical membrane-spanning segment. The MtN3/slv 2 domain occupies 133 to 216 (IVGILCAIFG…LILYAIYYRT (84 aa)). Residues 153–165 (MSQVVKTKSVEYM) are Cytoplasmic-facing. The helical transmembrane segment at 166–186 (PLLLSVVSFLNGLCWTSYALI) threads the bilayer. Residues 187–189 (RLD) are Extracellular-facing. The helical transmembrane segment at 190-210 (IFITIPNGLGVLFALMQLILY) threads the bilayer. At 211–266 (AIYYRTTPKKQDKNLELPTVAPVAKDTSIVTPVSKDDDVVDGGNASHVTINITIEP) the chain is on the cytoplasmic side.

The protein belongs to the SWEET sugar transporter family. Forms homooligomers and/or heterooligomers.

The protein resides in the cell membrane. Mediates both low-affinity uptake and efflux of sugar across the plasma membrane. The polypeptide is Bidirectional sugar transporter SWEET7b (SWEET7B) (Oryza sativa subsp. indica (Rice)).